The sequence spans 207 residues: Elongation factor 1-beta (207 aa).

At alanine 2 the chain carries N-acetylalanine. The tract at residues 70 to 96 (FPGIPTSASKEEDDDVDLFGSDEEDEE) is disordered. Over residues 80-96 (EEDDDVDLFGSDEEDEE) the composition is skewed to acidic residues. Serine 90 bears the Phosphoserine; by CK2 mark.

It belongs to the EF-1-beta/EF-1-delta family. As to quaternary structure, EF-1 is composed of 4 subunits: alpha, beta, delta, and gamma. In terms of processing, phosphorylation affects the GDP/GTP exchange rate.

Functionally, EF-1-beta and EF-1-delta stimulate the exchange of GDP bound to EF-1-alpha to GTP. The protein is Elongation factor 1-beta of Artemia salina (Brine shrimp).